Consider the following 336-residue polypeptide: Aspartate carbamoyltransferase catalytic subunit (336 aa).

2 residues coordinate carbamoyl phosphate: Arg-72 and Thr-73. Residue Lys-100 coordinates L-aspartate. Residues Arg-122, His-152, and Gln-155 each coordinate carbamoyl phosphate. L-aspartate contacts are provided by Arg-185 and Arg-240. The carbamoyl phosphate site is built by Gly-281 and Pro-282.

Belongs to the aspartate/ornithine carbamoyltransferase superfamily. ATCase family. As to quaternary structure, heterododecamer (2C3:3R2) of six catalytic PyrB chains organized as two trimers (C3), and six regulatory PyrI chains organized as three dimers (R2).

It catalyses the reaction carbamoyl phosphate + L-aspartate = N-carbamoyl-L-aspartate + phosphate + H(+). Its pathway is pyrimidine metabolism; UMP biosynthesis via de novo pathway; (S)-dihydroorotate from bicarbonate: step 2/3. Functionally, catalyzes the condensation of carbamoyl phosphate and aspartate to form carbamoyl aspartate and inorganic phosphate, the committed step in the de novo pyrimidine nucleotide biosynthesis pathway. The chain is Aspartate carbamoyltransferase catalytic subunit from Marinobacter nauticus (strain ATCC 700491 / DSM 11845 / VT8) (Marinobacter aquaeolei).